An 87-amino-acid chain; its full sequence is uncharacterized protein (87 aa).

The protein to A.fulgidus AF_0255 and AF_1348.

This is an uncharacterized protein from Archaeoglobus fulgidus (strain ATCC 49558 / DSM 4304 / JCM 9628 / NBRC 100126 / VC-16).